The primary structure comprises 336 residues: Torsin-1B (336 aa).

Positions 1–24 (MRRIGAFGGSTALWALLAAHVAGA) are cleaved as a signal peptide. N-linked (GlcNAc...) asparagine glycosylation is present at asparagine 64. Residue 109-116 (GWAGTGKN) participates in ATP binding. Asparagine 165 carries an N-linked (GlcNAc...) asparagine glycan.

This sequence belongs to the ClpA/ClpB family. Torsin subfamily. As to quaternary structure, homohexamer. Interacts with TOR1A; the interaction may be specific of neural tissues. Interacts with TOR1AIP1; TOR1AIP1 is required for TOR1B location on the nuclear membrane. Interacts (ATP-bound) with TOR1AIP2; important for endoplasmic reticulum integrity. Post-translationally, N-glycosylated. Highly expressed in liver and muscle; lower expression levels are observed in brain (at protein level).

The protein resides in the endoplasmic reticulum lumen. It localises to the nucleus membrane. The enzyme catalyses ATP + H2O = ADP + phosphate + H(+). Its function is as follows. May serve as a molecular chaperone assisting in the proper folding of secreted and/or membrane proteins. Plays a role in non-neural cells nuclear envelope and endoplasmic reticulum integrity. May have a redundant function with TOR1A in non-neural tissues. In Mus musculus (Mouse), this protein is Torsin-1B (Tor1b).